The sequence spans 237 residues: MGPVSARRSRLRPEISLILFQVGMVGACTVYVLQPGYLEVDYGSDAVTMECNFSTVGCPPVPPKSLWFRCGTHQPEALCLDGCRNEADKFTVKETLDPDQVFLTVNRLSPNDSAIYICGIAFPNELSPSAKHVGKGTTLVVRERLFSKEVRSFLIVLLALLSVYITGVCVTFIVLFKSKSNGPRSRETKGSKKKSARRIFQEIAQELYHKRYVETSHLPEQEGTDENRKALPNPGRA.

The signal sequence occupies residues 1–27 (MGPVSARRSRLRPEISLILFQVGMVGA). At 28–152 (CTVYVLQPGY…ERLFSKEVRS (125 aa)) the chain is on the extracellular side. An Ig-like C2-type domain is found at 30–134 (VYVLQPGYLE…ELSPSAKHVG (105 aa)). The cysteines at positions 51 and 118 are disulfide-linked. The chain crosses the membrane as a helical span at residues 153 to 173 (FLIVLLALLSVYITGVCVTFI). Residues 174 to 237 (VLFKSKSNGP…RKALPNPGRA (64 aa)) lie on the Cytoplasmic side of the membrane. The segment covering 215 to 229 (TSHLPEQEGTDENRK) has biased composition (basic and acidic residues). Residues 215 to 237 (TSHLPEQEGTDENRKALPNPGRA) are disordered.

Ubiquitous with higher expression in immune tissue.

The protein resides in the membrane. This Mus musculus (Mouse) protein is Immunoglobulin superfamily member 6 (Igsf6).